A 295-amino-acid polypeptide reads, in one-letter code: Elongation factor Ts (295 aa).

Residues 79-82 (TDFV) form an involved in Mg(2+) ion dislocation from EF-Tu region.

This sequence belongs to the EF-Ts family.

It is found in the cytoplasm. Its function is as follows. Associates with the EF-Tu.GDP complex and induces the exchange of GDP to GTP. It remains bound to the aminoacyl-tRNA.EF-Tu.GTP complex up to the GTP hydrolysis stage on the ribosome. This chain is Elongation factor Ts, found in Bacillus cereus (strain G9842).